Here is a 130-residue protein sequence, read N- to C-terminus: Small ribosomal subunit protein uS11 (130 aa).

The protein belongs to the universal ribosomal protein uS11 family. Part of the 30S ribosomal subunit. Interacts with proteins S7 and S18. Binds to IF-3.

Located on the platform of the 30S subunit, it bridges several disparate RNA helices of the 16S rRNA. Forms part of the Shine-Dalgarno cleft in the 70S ribosome. This Syntrophus aciditrophicus (strain SB) protein is Small ribosomal subunit protein uS11.